Reading from the N-terminus, the 256-residue chain is Ribonuclease 3 (256 aa).

One can recognise an RNase III domain in the interval 3 to 125 (LDALQQRLGY…IFGAVFLDGG (123 aa)). Residue glutamate 38 coordinates Mg(2+). The active site involves aspartate 42. Residues aspartate 111 and glutamate 114 each coordinate Mg(2+). Glutamate 114 is an active-site residue. The 71-residue stretch at 152–222 (DAKTLLQEYL…AKLALDEAHR (71 aa)) folds into the DRBM domain. The tract at residues 226–256 (QLVKRSRAERTGKTRKQATPPDPQLSLRLKE) is disordered.

It belongs to the ribonuclease III family. As to quaternary structure, homodimer. It depends on Mg(2+) as a cofactor.

It localises to the cytoplasm. It catalyses the reaction Endonucleolytic cleavage to 5'-phosphomonoester.. Functionally, digests double-stranded RNA. Involved in the processing of primary rRNA transcript to yield the immediate precursors to the large and small rRNAs (23S and 16S). Processes some mRNAs, and tRNAs when they are encoded in the rRNA operon. Processes pre-crRNA and tracrRNA of type II CRISPR loci if present in the organism. This chain is Ribonuclease 3, found in Ralstonia pickettii (strain 12J).